A 1086-amino-acid chain; its full sequence is WD repeat-containing protein 64 (1086 aa).

WD repeat units lie at residues 129–168 (RRRD…WITG), 170–199 (DYLG…SSQE), 321–360 (AMPR…KPVG), 364–403 (GHMF…VLQV), 411–448 (PGDM…QDTK), 453–492 (THER…QIYQ), 498–537 (GLSI…EMKM), 560–602 (QVKQ…PYLQ), and 642–683 (IVDV…VKEI). The tract at residues 724 to 749 (ICSSTQCDSSKGPQSSKGSKQSIHDA) is disordered. Residues 732 to 744 (SSKGPQSSKGSKQ) are compositionally biased toward low complexity. WD repeat units lie at residues 765-806 (ASRK…KDML), 809-850 (TKHS…DPPH), and 863-902 (AHSL…YCGY). The segment at 1047–1069 (DKVKREEAPEMTEGSRRKSLKRN) is disordered. A compositionally biased stretch (basic and acidic residues) spans 1049–1062 (VKREEAPEMTEGSR).

In Mus musculus (Mouse), this protein is WD repeat-containing protein 64 (Wdr64).